The sequence spans 934 residues: Protein translocase subunit SecA (934 aa).

ATP contacts are provided by residues Gln-87, 105-109 (GEGKT), and Asp-515. Cys-918, Cys-920, Cys-929, and His-930 together coordinate Zn(2+).

Belongs to the SecA family. In terms of assembly, monomer and homodimer. Part of the essential Sec protein translocation apparatus which comprises SecA, SecYEG and auxiliary proteins SecDF-YajC and YidC. Zn(2+) serves as cofactor.

It is found in the cell inner membrane. Its subcellular location is the cytoplasm. The enzyme catalyses ATP + H2O + cellular proteinSide 1 = ADP + phosphate + cellular proteinSide 2.. Its function is as follows. Part of the Sec protein translocase complex. Interacts with the SecYEG preprotein conducting channel. Has a central role in coupling the hydrolysis of ATP to the transfer of proteins into and across the cell membrane, serving both as a receptor for the preprotein-SecB complex and as an ATP-driven molecular motor driving the stepwise translocation of polypeptide chains across the membrane. In Ralstonia pickettii (strain 12J), this protein is Protein translocase subunit SecA.